Consider the following 69-residue polypeptide: DNA gyrase inhibitor YacG (69 aa).

4 residues coordinate Zn(2+): cysteine 13, cysteine 16, cysteine 32, and cysteine 36.

This sequence belongs to the DNA gyrase inhibitor YacG family. In terms of assembly, interacts with GyrB. Zn(2+) is required as a cofactor.

Its function is as follows. Inhibits all the catalytic activities of DNA gyrase by preventing its interaction with DNA. Acts by binding directly to the C-terminal domain of GyrB, which probably disrupts DNA binding by the gyrase. The protein is DNA gyrase inhibitor YacG of Neisseria meningitidis serogroup C / serotype 2a (strain ATCC 700532 / DSM 15464 / FAM18).